The primary structure comprises 434 residues: UDP-glucuronate 4-epimerase 2 (434 aa).

2 helical membrane passes run 32–52 and 91–111; these read SVAKLAFWSLVFFGLLFIFFY and GVSVLVTGAAGFVGTHVSAAL. An NAD(+)-binding site is contributed by 93–124; that stretch reads SVLVTGAAGFVGTHVSAALKRRGDGVLGLDNF. The active-site Proton acceptor is tyrosine 243.

Belongs to the NAD(P)-dependent epimerase/dehydratase family. Homodimer. In terms of tissue distribution, in roots, leaves, siliques, flowers, pollen and stems.

The protein localises to the golgi apparatus. It localises to the golgi stack membrane. It carries out the reaction UDP-alpha-D-glucuronate = UDP-alpha-D-galacturonate. Its function is as follows. Involved in the synthesis of the negatively charged monosaccharide that forms the backbone of pectic cell wall components. In Arabidopsis thaliana (Mouse-ear cress), this protein is UDP-glucuronate 4-epimerase 2 (GAE2).